A 256-amino-acid chain; its full sequence is 5-keto-4-deoxy-D-glucarate aldolase (256 aa).

H50 (proton acceptor) is an active-site residue. Q151 is a binding site for substrate. E153 lines the Mg(2+) pocket. S178 and D179 together coordinate substrate. D179 provides a ligand contact to Mg(2+).

It belongs to the HpcH/HpaI aldolase family. KDGluc aldolase subfamily. Homohexamer; trimer of dimers. Mg(2+) serves as cofactor.

It carries out the reaction 5-dehydro-4-deoxy-D-glucarate = 2-hydroxy-3-oxopropanoate + pyruvate. The catalysed reaction is 2-dehydro-3-deoxy-D-glucarate = 2-hydroxy-3-oxopropanoate + pyruvate. The protein operates within carbohydrate acid metabolism; galactarate degradation; D-glycerate from galactarate: step 2/3. Its function is as follows. Catalyzes the reversible retro-aldol cleavage of both 5-keto-4-deoxy-D-glucarate and 2-keto-3-deoxy-D-glucarate to pyruvate and tartronic semialdehyde. This is 5-keto-4-deoxy-D-glucarate aldolase from Escherichia fergusonii (strain ATCC 35469 / DSM 13698 / CCUG 18766 / IAM 14443 / JCM 21226 / LMG 7866 / NBRC 102419 / NCTC 12128 / CDC 0568-73).